Reading from the N-terminus, the 94-residue chain is Co-chaperonin GroES (94 aa).

Belongs to the GroES chaperonin family. As to quaternary structure, heptamer of 7 subunits arranged in a ring. Interacts with the chaperonin GroEL.

The protein localises to the cytoplasm. Its function is as follows. Together with the chaperonin GroEL, plays an essential role in assisting protein folding. The GroEL-GroES system forms a nano-cage that allows encapsulation of the non-native substrate proteins and provides a physical environment optimized to promote and accelerate protein folding. GroES binds to the apical surface of the GroEL ring, thereby capping the opening of the GroEL channel. The polypeptide is Co-chaperonin GroES (Halalkalibacterium halodurans (strain ATCC BAA-125 / DSM 18197 / FERM 7344 / JCM 9153 / C-125) (Bacillus halodurans)).